The chain runs to 182 residues: MFTTIKKTVIGLFTIVRSMWMVNSHALRPRDTILYPEVPVPVPPRFRGRIILSRDPDGDERCVACNLCAVACPVGCISLQKAEREDGRWYPEFFRINFSRCIFCGLCEEACPTTAIQMTPDFEMGEYVRQDLVYEKEHLLISGPGKYPDYNYYRVTGMAVADKPKGAAQNEAAPIDLRSLLP.

4Fe-4S ferredoxin-type domains lie at 50 to 82 (IILS…LQKA) and 92 to 121 (EFFR…MTPD). 8 residues coordinate [4Fe-4S] cluster: Cys62, Cys65, Cys68, Cys72, Cys101, Cys104, Cys107, and Cys111.

This sequence belongs to the complex I 23 kDa subunit family. In terms of assembly, NDH-1 is composed of 14 different subunits. Subunits NuoA, H, J, K, L, M, N constitute the membrane sector of the complex. The cofactor is [4Fe-4S] cluster.

The protein localises to the cell inner membrane. It catalyses the reaction a quinone + NADH + 5 H(+)(in) = a quinol + NAD(+) + 4 H(+)(out). NDH-1 shuttles electrons from NADH, via FMN and iron-sulfur (Fe-S) centers, to quinones in the respiratory chain. The immediate electron acceptor for the enzyme in this species is believed to be ubiquinone. Couples the redox reaction to proton translocation (for every two electrons transferred, four hydrogen ions are translocated across the cytoplasmic membrane), and thus conserves the redox energy in a proton gradient. The protein is NADH-quinone oxidoreductase subunit I of Psychrobacter cryohalolentis (strain ATCC BAA-1226 / DSM 17306 / VKM B-2378 / K5).